Reading from the N-terminus, the 218-residue chain is Ropporin-1-like protein (218 aa).

Positions 17–54 constitute an RIIa domain; the sequence is PELPDILKQFTKAAIRTQPADVLQWSAGYFSALSRGDP.

Belongs to the ropporin family. As to quaternary structure, component of the axonemal radial spoke complex 1 (RS1), at least composed of spoke head proteins RSPH1, RSPH3, RSPH9 and the cilia-specific component RSPH4A or sperm-specific component RSPH6A, spoke stalk proteins RSPH14, DNAJB13, DYDC1, ROPN1L and NME5, and the anchor protein IQUB. May interact with AKAP3. Interacts with FSCB; the interaction increases upon spermatozoa capacitation conditions. Interacts with CFAP61. Sumoylated, sumoylation decreases upon spermatozoa capacitation conditions. Testis-specific. Expression is restricted to germ cells.

The protein localises to the cell projection. It localises to the cilium. It is found in the flagellum. Functions as part of axonemal radial spoke complexes that play an important part in the motility of sperm and cilia. Important for male fertility. With ROPN1, involved in fibrous sheath integrity and sperm motility, plays a role in PKA-dependent signaling processes required for spermatozoa capacitation. This Mus musculus (Mouse) protein is Ropporin-1-like protein (Ropn1l).